The following is a 184-amino-acid chain: MSIEIANESGIDVPEEDLVSVARFVIGRMDVHPAAELSMVLVDLDTMADLHMRWMDLPGPTDVMSFPMDELEPGGRPDSPEPGPSMLGDIVLCPEFAADQAHKAGHSLEHELALLTVHGVLHLLGYDHAEPEEEKEMFALQARLLEEWYESLREARRRAELAERDARLLGKAGFTAPGDALGPA.

Residues His118, His122, and His128 each contribute to the Zn(2+) site.

Belongs to the endoribonuclease YbeY family. Zn(2+) is required as a cofactor.

It is found in the cytoplasm. Its function is as follows. Single strand-specific metallo-endoribonuclease involved in late-stage 70S ribosome quality control and in maturation of the 3' terminus of the 16S rRNA. The chain is Endoribonuclease YbeY from Nocardia farcinica (strain IFM 10152).